Here is a 312-residue protein sequence, read N- to C-terminus: Olfactory receptor 867 (312 aa).

The Extracellular segment spans residues 1-6 (MILNCN). A helical membrane pass occupies residues 7–30 (PFSGLFLSMYLVTVLGNLLIILAV). The Cytoplasmic portion of the chain corresponds to 31 to 38 (SSNSHLHN). The helical transmembrane segment at 39 to 60 (LMYFFLSNLSFVDICFISTTIP) threads the bilayer. At 61–81 (KMLVNIHSQTKDISYIECLSQ) the chain is on the extracellular side. A disulfide bridge links cysteine 78 with cysteine 160. A helical membrane pass occupies residues 82–101 (VYFLTTFGGMDNFLLTLMAC). Topologically, residues 102–120 (DRYVAICHPLNYTVIMNLQ) are cytoplasmic. The chain crosses the membrane as a helical span at residues 121-139 (LCALLILMFWLIMFCVSLI). Topologically, residues 140–177 (HVLLMNELNFSRGTEIPHFFCELAQVLKVANSDTHINN) are extracellular. A glycan (N-linked (GlcNAc...) asparagine) is linked at asparagine 148. The helical transmembrane segment at 178–200 (VFMYVVTSLLGLIPMTGILMSYS) threads the bilayer. Topologically, residues 201–217 (QIASSLLKMSSSVSKYK) are cytoplasmic. Residues 218 to 241 (AFSTCGSHLCVVSLFYGSATIVYF) form a helical membrane-spanning segment. Over 242 to 253 (CSSVLHSTHKKM) the chain is Extracellular. A helical membrane pass occupies residues 254–273 (IASLMYTVISPMLNPFIYSL). Residues 274–312 (RNKDVKGALGKLFIRVASCPLWSKDFRPKFILKPERQSL) are Cytoplasmic-facing.

This sequence belongs to the G-protein coupled receptor 1 family. In terms of tissue distribution, epithelium of the tongue; including the taste buds.

It is found in the cell membrane. Possible olfactory or taste receptor. This is Olfactory receptor 867 (Olr867) from Rattus norvegicus (Rat).